Here is a 61-residue protein sequence, read N- to C-terminus: Large ribosomal subunit protein uL29 (61 aa).

It belongs to the universal ribosomal protein uL29 family.

This Stenotrophomonas maltophilia (strain K279a) protein is Large ribosomal subunit protein uL29.